We begin with the raw amino-acid sequence, 68 residues long: uncharacterized protein (68 aa).

It to B.subtilis XtrA.

This is an uncharacterized protein from Bacillus subtilis (strain 168).